The following is a 296-amino-acid chain: 4-hydroxy-tetrahydrodipicolinate synthase (296 aa).

Position 49 (threonine 49) interacts with pyruvate. Tyrosine 137 serves as the catalytic Proton donor/acceptor. Residue lysine 165 is the Schiff-base intermediate with substrate of the active site. Isoleucine 208 contributes to the pyruvate binding site.

Belongs to the DapA family. Homotetramer; dimer of dimers.

The protein localises to the cytoplasm. The enzyme catalyses L-aspartate 4-semialdehyde + pyruvate = (2S,4S)-4-hydroxy-2,3,4,5-tetrahydrodipicolinate + H2O + H(+). It functions in the pathway amino-acid biosynthesis; L-lysine biosynthesis via DAP pathway; (S)-tetrahydrodipicolinate from L-aspartate: step 3/4. Its function is as follows. Catalyzes the condensation of (S)-aspartate-beta-semialdehyde [(S)-ASA] and pyruvate to 4-hydroxy-tetrahydrodipicolinate (HTPA). In Ehrlichia canis (strain Jake), this protein is 4-hydroxy-tetrahydrodipicolinate synthase.